Reading from the N-terminus, the 136-residue chain is MSEALKILNNIRTLRAQARECTLETLEEMLEKLEVVVNERREEDSQAQAEIEERTRKLQQYREMLIADGIDPNELLNAMAVTKAAATKSKRAARPAKYKYIDENGETKTWTGQGRTPAVIKKAIEEQGKSLDDFLL.

The stretch at 13-67 (TLRAQARECTLETLEEMLEKLEVVVNERREEDSQAQAEIEERTRKLQQYREMLIA) forms a coiled coil. The DNA-binding element occupies 113–118 (QGRTPA).

This sequence belongs to the histone-like protein H-NS family. In terms of assembly, interacts with YmoA in the absence of DNA. Homodimer that oligomerizes on DNA into higher-order complexes that form bridges between disparate regions of DNA compacting it. Interacts with YmoA.

Its subcellular location is the cytoplasm. It localises to the nucleoid. A DNA-binding protein implicated in transcriptional repression and chromosome organization and compaction. Binds nucleation sites in AT-rich DNA and bridges them, forming higher-order nucleoprotein complexes and condensing the chromosome. As many horizontally transferred genes are AT-rich, it plays a central role in silencing foreign genes. A subset of genes are repressed by H-NS in association with YmoA. Complements a number of hns deficiencies in E.coli; represses the bgl operon, represses hemolysin expression. The sequence is that of DNA-binding protein H-NS from Yersinia enterocolitica.